A 286-amino-acid polypeptide reads, in one-letter code: L-cysteine S-thiosulfotransferase subunit SoxA (286 aa).

Positions 1–26 (MTVSKRFLAPVFAMVGGLVLAFSANA) are cleaved as a signal peptide. In terms of domain architecture, Cytochrome c spans 80–166 (LAVERGADIW…ALTSYIKHQS (87 aa)). Residues cysteine 100, cysteine 103, histidine 104, cysteine 138, cysteine 202, cysteine 205, and histidine 206 each coordinate heme. Arginine 243 is a substrate binding site. Residue cysteine 247 coordinates heme. The active-site Cysteine persulfide intermediate is the cysteine 247.

It belongs to the SoxA family. Heterodimer of SoxA and SoxX. It depends on heme as a cofactor. Post-translationally, cysteine persulfide at Cys-247.

The protein resides in the periplasm. It catalyses the reaction L-cysteinyl-[SoxY protein] + thiosulfate + 2 Fe(III)-[cytochrome c] = S-sulfosulfanyl-L-cysteinyl-[SoxY protein] + 2 Fe(II)-[cytochrome c] + 2 H(+). The enzyme catalyses S-sulfanyl-L-cysteinyl-[SoxY protein] + thiosulfate + 2 Fe(III)-[cytochrome c] = S-(2-sulfodisulfanyl)-L-cysteinyl-[SoxY protein] + 2 Fe(II)-[cytochrome c] + 2 H(+). C-type diheme cytochrome, which is part of the SoxAX cytochrome complex involved in sulfur oxidation. The SoxAX complex catalyzes the formation of a heterodisulfide bond between the conserved cysteine residue on a sulfur carrier SoxYZ complex subunit SoxY and thiosulfate or other inorganic sulfur substrates. This leads to the liberation of two electrons, which may be transferred from the SoxAX complex to another cytochrome c that then channels them into the respiratory electron transport chain. Some electrons may be used for reductive CO(2) fixation. The sequence is that of L-cysteine S-thiosulfotransferase subunit SoxA from Pseudaminobacter salicylatoxidans.